The sequence spans 297 residues: N-acetylneuraminate lyase (297 aa).

Serine 47 and threonine 48 together coordinate aceneuramate. Residue tyrosine 137 is the Proton donor of the active site. Lysine 165 acts as the Schiff-base intermediate with substrate in catalysis. Aceneuramate-binding residues include threonine 167, glycine 189, aspartate 191, glutamate 192, and serine 208.

Belongs to the DapA family. NanA subfamily. In terms of assembly, homotetramer.

The protein resides in the cytoplasm. The catalysed reaction is aceneuramate = aldehydo-N-acetyl-D-mannosamine + pyruvate. It functions in the pathway amino-sugar metabolism; N-acetylneuraminate degradation; D-fructose 6-phosphate from N-acetylneuraminate: step 1/5. Its function is as follows. Catalyzes the reversible aldol cleavage of N-acetylneuraminic acid (sialic acid; Neu5Ac) to form pyruvate and N-acetylmannosamine (ManNAc) via a Schiff base intermediate. The protein is N-acetylneuraminate lyase of Citrobacter koseri (strain ATCC BAA-895 / CDC 4225-83 / SGSC4696).